We begin with the raw amino-acid sequence, 453 residues long: tRNA-2-methylthio-N(6)-dimethylallyladenosine synthase (453 aa).

Positions 4-118 (KKFYIENYGC…IPNLINNFFK (115 aa)) constitute an MTTase N-terminal domain. 6 residues coordinate [4Fe-4S] cluster: cysteine 13, cysteine 49, cysteine 83, cysteine 156, cysteine 160, and cysteine 163. In terms of domain architecture, Radical SAM core spans 142 to 388 (EEKKITAFVT…NLQKTHSYYR (247 aa)). The region spanning 390–453 (RKYIGSIQDI…SATLVGDIYV (64 aa)) is the TRAM domain.

This sequence belongs to the methylthiotransferase family. MiaB subfamily. Monomer. [4Fe-4S] cluster serves as cofactor.

It localises to the cytoplasm. It catalyses the reaction N(6)-dimethylallyladenosine(37) in tRNA + (sulfur carrier)-SH + AH2 + 2 S-adenosyl-L-methionine = 2-methylsulfanyl-N(6)-dimethylallyladenosine(37) in tRNA + (sulfur carrier)-H + 5'-deoxyadenosine + L-methionine + A + S-adenosyl-L-homocysteine + 2 H(+). Catalyzes the methylthiolation of N6-(dimethylallyl)adenosine (i(6)A), leading to the formation of 2-methylthio-N6-(dimethylallyl)adenosine (ms(2)i(6)A) at position 37 in tRNAs that read codons beginning with uridine. The protein is tRNA-2-methylthio-N(6)-dimethylallyladenosine synthase of Karelsulcia muelleri (strain GWSS) (Sulcia muelleri).